The chain runs to 464 residues: Argininosuccinate lyase (464 aa).

Belongs to the lyase 1 family. Argininosuccinate lyase subfamily.

It is found in the cytoplasm. The catalysed reaction is 2-(N(omega)-L-arginino)succinate = fumarate + L-arginine. The protein operates within amino-acid biosynthesis; L-arginine biosynthesis; L-arginine from L-ornithine and carbamoyl phosphate: step 3/3. The chain is Argininosuccinate lyase from Pseudomonas fluorescens (strain SBW25).